A 700-amino-acid chain; its full sequence is MLKMLSFKLLLLAVALGFFEGDAKFGERNEGSGARRRRCLNGNPPKRLKRRDRRMMSQLELLSGGEMLCGGFYPRLSCCLRSDSPGLGRLENKIFSVTNNTECGKLLEEIKCALCSPHSQSLFHSPEREVLERDLVLPLLCKDYCKEFFYTCRGHIPGFLQTTADEFCFYYARKDGGLCFPDFPRKQVRGPASNYLDQMEEYDKVEEISRKHKHNCFCIQEVVSGLRQPVGALHSGDGSQRLFILEKEGYVKILTPEGEIFKEPYLDIHKLVQSGIKGGDERGLLSLAFHPNYKKNGKLYVSYTTNQERWAIGPHDHILRVVEYTVSRKNPHQVDLRTARVFLEVAELHRKHLGGQLLFGPDGFLYIILGDGMITLDDMEEMDGLSDFTGSVLRLDVDTDMCNVPYSIPRSNPHFNSTNQPPEVFAHGLHDPGRCAVDRHPTDININLTILCSDSNGKNRSSARILQIIKGKDYESEPSLLEFKPFSNGPLVGGFVYRGCQSERLYGSYVFGDRNGNFLTLQQSPVTKQWQEKPLCLGTSGSCRGYFSGHILGFGEDELGEVYILSSSKSMTQTHNGKLYKIVDPKRPLMPEECRATVQPAQTLTSECSRLCRNGYCTPTGKCCCSPGWEGDFCRTAKCEPACRHGGVCVRPNKCLCKKGYLGPQCEQVDRNIRRVTRAGILDQIIDMTSYLLDLTSYIV.

Positions 1-17 (MLKMLSFKLLLLAVALG) are cleaved as a signal peptide. Asparagine 99 carries an N-linked (GlcNAc...) asparagine glycan. 11 cysteine pairs are disulfide-bonded: cysteine 216-cysteine 536, cysteine 218-cysteine 543, cysteine 402-cysteine 624, cysteine 435-cysteine 452, cysteine 500-cysteine 594, cysteine 608-cysteine 617, cysteine 612-cysteine 623, cysteine 625-cysteine 634, cysteine 639-cysteine 649, cysteine 643-cysteine 655, and cysteine 657-cysteine 666. Positions 376–388 (LDDMEEMDGLSDF) are interaction with SHH zinc binding site. Residue aspartate 383 coordinates Zn(2+). 3 N-linked (GlcNAc...) asparagine glycosylation sites follow: asparagine 416, asparagine 447, and asparagine 459. 2 consecutive EGF-like domains span residues 607-634 (ECSRLCRNGYCTPTGKCCCSPGWEGDFC) and 635-667 (RTAKCEPACRHGGVCVRPNKCLCKKGYLGPQCE).

This sequence belongs to the HHIP family. Interacts with all three hedgehog family members, SHH, IHH and DHH. As to expression, widely expressed in fetal and adult tissues. Highest expression in adult heart, liver and pancreas, and in fetal kidney.

The protein resides in the cell membrane. It is found in the secreted. It localises to the cytoplasm. Functionally, modulates hedgehog signaling in several cell types including brain and lung through direct interaction with members of the hedgehog family. In Homo sapiens (Human), this protein is Hedgehog-interacting protein (HHIP).